The chain runs to 529 residues: uncharacterized protein (529 aa).

The interval 1–20 (MGADLKQPQDADSPPKGVSR) is disordered. The tat-type signal signal peptide spans 1–52 (MGADLKQPQDADSPPKGVSRRRFLTTGAAAVVGTGVGAGGTALLSSHPRGPA).

Predicted to be exported by the Tat system. The position of the signal peptide cleavage has not been experimentally proven.

This is an uncharacterized protein from Mycobacterium tuberculosis (strain CDC 1551 / Oshkosh).